The primary structure comprises 350 residues: Palmitoyltransferase erf2 (350 aa).

The Cytoplasmic portion of the chain corresponds to 1 to 86; that stretch reads MSYEKHSDAK…RLQMSSQYKA (86 aa). The helical transmembrane segment at 87–107 threads the bilayer; sequence FLISLFALILPGVLFFIFSAF. Topologically, residues 108 to 112 are lumenal; that stretch reads WLWHH. Residues 113–133 traverse the membrane as a helical segment; it reads VSPAVPITFAYLYALAVVSMF. Residues 134-225 lie on the Cytoplasmic side of the membrane; sequence KCSTADPGIL…NTCIGRRNYR (92 aa). In terms of domain architecture, DHHC spans 182-232; sequence VYCHTCHLYRPPRASHCHLCDNCVEYLDHHCIWLNTCIGRRNYRYYFIFLL. The active-site S-palmitoyl cysteine intermediate is C212. A helical membrane pass occupies residues 226–246; the sequence is YYFIFLLSVVLSALYLTGLGF. Topologically, residues 247-270 are lumenal; sequence YTSIGSFHESTDTNFAAHLRRPWA. The chain crosses the membrane as a helical span at residues 271-291; it reads GVSFFLGIYGALGAILPGILF. The Cytoplasmic segment spans residues 292 to 350; it reads CYQCYLISVGQNVHEYLRAKSTETEDVHPFHDSIWLNFLVVLCRPKNVSYVRPTRKSYV.

It belongs to the DHHC palmitoyltransferase family. ERF2/ZDHHC9 subfamily. As to quaternary structure, interacts with erf4. In terms of processing, autopalmitoylated.

It is found in the endoplasmic reticulum membrane. The protein resides in the golgi apparatus. The protein localises to the golgi stack membrane. It carries out the reaction L-cysteinyl-[protein] + hexadecanoyl-CoA = S-hexadecanoyl-L-cysteinyl-[protein] + CoA. Functionally, the erf2-erf4 complex is a palmitoyltransferase with a major role in driving sexual development. Palmitoylates ras1. Palmitoylates isp3. Palmitoylates rho3. The chain is Palmitoyltransferase erf2 from Schizosaccharomyces pombe (strain 972 / ATCC 24843) (Fission yeast).